We begin with the raw amino-acid sequence, 443 residues long: Adenylyltransferase and sulfurtransferase UBA4 (443 aa).

ATP-binding positions include Gly-83, Asp-104, 111–115 (SNLHR), Lys-128, and 172–173 (DT). Zn(2+)-binding residues include Cys-214 and Cys-217. The active-site Glycyl thioester intermediate; for adenylyltransferase activity is the Cys-231. Zn(2+) contacts are provided by Cys-292 and Cys-295. A Rhodanese domain is found at 343–441 (QSKAPVLLDV…WSDIVNPKFP (99 aa)). Catalysis depends on Cys-400, which acts as the Cysteine persulfide intermediate; for sulfurtransferase activity.

It in the N-terminal section; belongs to the HesA/MoeB/ThiF family. UBA4 subfamily. Requires Zn(2+) as cofactor.

Its subcellular location is the cytoplasm. The protein resides in the cytosol. Its pathway is tRNA modification; 5-methoxycarbonylmethyl-2-thiouridine-tRNA biosynthesis. In terms of biological role, plays a central role in 2-thiolation of mcm(5)S(2)U at tRNA wobble positions of cytosolic tRNA(Lys), tRNA(Glu) and tRNA(Gln). Acts by mediating the C-terminal thiocarboxylation of sulfur carrier URM1. Its N-terminus first activates URM1 as acyl-adenylate (-COAMP), then the persulfide sulfur on the catalytic cysteine is transferred to URM1 to form thiocarboxylation (-COSH) of its C-terminus. The reaction probably involves hydrogen sulfide that is generated from the persulfide intermediate and that acts as a nucleophile towards URM1. Subsequently, a transient disulfide bond is formed. Does not use thiosulfate as sulfur donor; NFS1 probably acting as a sulfur donor for thiocarboxylation reactions. Prior mcm(5) tRNA modification by the elongator complex is required for 2-thiolation. May also be involved in protein urmylation. The protein is Adenylyltransferase and sulfurtransferase UBA4 of Scheffersomyces stipitis (strain ATCC 58785 / CBS 6054 / NBRC 10063 / NRRL Y-11545) (Yeast).